Here is a 600-residue protein sequence, read N- to C-terminus: Proline--tRNA ligase (600 aa).

Belongs to the class-II aminoacyl-tRNA synthetase family. ProS type 1 subfamily. In terms of assembly, homodimer.

It is found in the cytoplasm. The enzyme catalyses tRNA(Pro) + L-proline + ATP = L-prolyl-tRNA(Pro) + AMP + diphosphate. Catalyzes the attachment of proline to tRNA(Pro) in a two-step reaction: proline is first activated by ATP to form Pro-AMP and then transferred to the acceptor end of tRNA(Pro). As ProRS can inadvertently accommodate and process non-cognate amino acids such as alanine and cysteine, to avoid such errors it has two additional distinct editing activities against alanine. One activity is designated as 'pretransfer' editing and involves the tRNA(Pro)-independent hydrolysis of activated Ala-AMP. The other activity is designated 'posttransfer' editing and involves deacylation of mischarged Ala-tRNA(Pro). The misacylated Cys-tRNA(Pro) is not edited by ProRS. This Prochlorococcus marinus (strain MIT 9515) protein is Proline--tRNA ligase.